The following is a 275-amino-acid chain: 3-methyl-2-oxobutanoate hydroxymethyltransferase (275 aa).

Asp49 and Asp88 together coordinate Mg(2+). Residues 49–50 (DS), Asp88, and Lys118 each bind 3-methyl-2-oxobutanoate. A Mg(2+)-binding site is contributed by Glu120. Glu187 (proton acceptor) is an active-site residue.

Belongs to the PanB family. In terms of assembly, homodecamer; pentamer of dimers. It depends on Mg(2+) as a cofactor.

Its subcellular location is the cytoplasm. It carries out the reaction 3-methyl-2-oxobutanoate + (6R)-5,10-methylene-5,6,7,8-tetrahydrofolate + H2O = 2-dehydropantoate + (6S)-5,6,7,8-tetrahydrofolate. Its pathway is cofactor biosynthesis; (R)-pantothenate biosynthesis; (R)-pantoate from 3-methyl-2-oxobutanoate: step 1/2. Catalyzes the reversible reaction in which hydroxymethyl group from 5,10-methylenetetrahydrofolate is transferred onto alpha-ketoisovalerate to form ketopantoate. This Bordetella petrii (strain ATCC BAA-461 / DSM 12804 / CCUG 43448) protein is 3-methyl-2-oxobutanoate hydroxymethyltransferase.